A 183-amino-acid chain; its full sequence is MVVDLKMLAMIFIINFAYITLNTIRFMLTMKGYRVIAPLVSMAEITIYVLGLSMVLNRLDNPLNLLVYALGYAVGISVGIKIEDYLALGYIMVSVILPSTTEQFHLPETLREHGYGVTQSVAYGREGERMVLEILSPRKNERTLYKLINQLEPRAFIISYEPKFISGGFWTKKVRKRNDAISH.

Transmembrane regions (helical) follow at residues 1–21 (MVVD…YITL), 35–55 (VIAP…LSMV), and 62–82 (PLNL…GIKI).

Belongs to the UPF0316 family.

Its subcellular location is the cell membrane. This chain is UPF0316 protein EF_1609, found in Enterococcus faecalis (strain ATCC 700802 / V583).